The primary structure comprises 172 residues: Transcriptional repressor NrdR (172 aa).

A zinc finger spans residues 3–34 (CPFCSYSDNRVLESRLAEEGESVRRRRECKQC). The ATP-cone domain occupies 49-139 (TVVIKRNGRR…VYRKFKGVAD (91 aa)).

This sequence belongs to the NrdR family. It depends on Zn(2+) as a cofactor.

Negatively regulates transcription of bacterial ribonucleotide reductase nrd genes and operons by binding to NrdR-boxes. The protein is Transcriptional repressor NrdR of Gloeobacter violaceus (strain ATCC 29082 / PCC 7421).